Reading from the N-terminus, the 305-residue chain is Homoserine O-acetyltransferase (305 aa).

Catalysis depends on Cys-132, which acts as the Acyl-thioester intermediate. Substrate contacts are provided by Lys-153 and Ser-181. His-221 (proton acceptor) is an active-site residue. Glu-223 is an active-site residue. Arg-235 contributes to the substrate binding site.

The protein belongs to the MetA family.

Its subcellular location is the cytoplasm. It catalyses the reaction L-homoserine + acetyl-CoA = O-acetyl-L-homoserine + CoA. It functions in the pathway amino-acid biosynthesis; L-methionine biosynthesis via de novo pathway; O-acetyl-L-homoserine from L-homoserine: step 1/1. In terms of biological role, transfers an acetyl group from acetyl-CoA to L-homoserine, forming acetyl-L-homoserine. The sequence is that of Homoserine O-acetyltransferase from Leuconostoc mesenteroides subsp. mesenteroides (strain ATCC 8293 / DSM 20343 / BCRC 11652 / CCM 1803 / JCM 6124 / NCDO 523 / NBRC 100496 / NCIMB 8023 / NCTC 12954 / NRRL B-1118 / 37Y).